We begin with the raw amino-acid sequence, 301 residues long: Protoheme IX farnesyltransferase (301 aa).

9 helical membrane-spanning segments follow: residues 16–36 (VVAL…PGIP), 41–61 (IQSG…AAAI), 93–113 (VFAG…VNLI), 114–134 (TAVL…VYLK), 141–161 (IVIG…AVTG), 172–192 (SLLV…LAIF), 217–237 (QILL…ATGM), 238–258 (SGVF…WYAW), and 273–293 (FGYS…DHWL).

It belongs to the UbiA prenyltransferase family. Protoheme IX farnesyltransferase subfamily.

Its subcellular location is the cell inner membrane. The catalysed reaction is heme b + (2E,6E)-farnesyl diphosphate + H2O = Fe(II)-heme o + diphosphate. The protein operates within porphyrin-containing compound metabolism; heme O biosynthesis; heme O from protoheme: step 1/1. Its function is as follows. Converts heme B (protoheme IX) to heme O by substitution of the vinyl group on carbon 2 of heme B porphyrin ring with a hydroxyethyl farnesyl side group. The sequence is that of Protoheme IX farnesyltransferase from Xylella fastidiosa (strain 9a5c).